Here is a 155-residue protein sequence, read N- to C-terminus: Deoxyuridine 5'-triphosphate nucleotidohydrolase (155 aa).

Substrate contacts are provided by residues 74-76, Asn87, and 91-93; these read RSG and LID.

This sequence belongs to the dUTPase family. It depends on Mg(2+) as a cofactor.

The catalysed reaction is dUTP + H2O = dUMP + diphosphate + H(+). Its pathway is pyrimidine metabolism; dUMP biosynthesis; dUMP from dCTP (dUTP route): step 2/2. In terms of biological role, this enzyme is involved in nucleotide metabolism: it produces dUMP, the immediate precursor of thymidine nucleotides and it decreases the intracellular concentration of dUTP so that uracil cannot be incorporated into DNA. This chain is Deoxyuridine 5'-triphosphate nucleotidohydrolase, found in Xylella fastidiosa (strain M12).